Here is a 936-residue protein sequence, read N- to C-terminus: Protein translocase subunit SecA (936 aa).

ATP-binding positions include Gln87, 105-109, and Asp515; that span reads GEGKT. Zn(2+)-binding residues include Cys920, Cys922, Cys931, and His932.

It belongs to the SecA family. As to quaternary structure, monomer and homodimer. Part of the essential Sec protein translocation apparatus which comprises SecA, SecYEG and auxiliary proteins SecDF-YajC and YidC. Requires Zn(2+) as cofactor.

The protein localises to the cell inner membrane. Its subcellular location is the cytoplasm. The enzyme catalyses ATP + H2O + cellular proteinSide 1 = ADP + phosphate + cellular proteinSide 2.. In terms of biological role, part of the Sec protein translocase complex. Interacts with the SecYEG preprotein conducting channel. Has a central role in coupling the hydrolysis of ATP to the transfer of proteins into and across the cell membrane, serving both as a receptor for the preprotein-SecB complex and as an ATP-driven molecular motor driving the stepwise translocation of polypeptide chains across the membrane. In Paraburkholderia xenovorans (strain LB400), this protein is Protein translocase subunit SecA.